A 325-amino-acid chain; its full sequence is Transaldolase (325 aa).

K125 functions as the Schiff-base intermediate with substrate in the catalytic mechanism.

This sequence belongs to the transaldolase family. Type 2 subfamily.

It localises to the cytoplasm. It carries out the reaction D-sedoheptulose 7-phosphate + D-glyceraldehyde 3-phosphate = D-erythrose 4-phosphate + beta-D-fructose 6-phosphate. It functions in the pathway carbohydrate degradation; pentose phosphate pathway; D-glyceraldehyde 3-phosphate and beta-D-fructose 6-phosphate from D-ribose 5-phosphate and D-xylulose 5-phosphate (non-oxidative stage): step 2/3. In terms of biological role, transaldolase is important for the balance of metabolites in the pentose-phosphate pathway. The protein is Transaldolase of Campylobacter jejuni subsp. jejuni serotype O:6 (strain 81116 / NCTC 11828).